The following is a 583-amino-acid chain: Isocitrate dehydrogenase kinase/phosphatase (583 aa).

ATP-binding positions include 315-321 and Lys336; that span reads APGIRGM. The active site involves Asp371.

The protein belongs to the AceK family.

Its subcellular location is the cytoplasm. The catalysed reaction is L-seryl-[isocitrate dehydrogenase] + ATP = O-phospho-L-seryl-[isocitrate dehydrogenase] + ADP + H(+). In terms of biological role, bifunctional enzyme which can phosphorylate or dephosphorylate isocitrate dehydrogenase (IDH) on a specific serine residue. This is a regulatory mechanism which enables bacteria to bypass the Krebs cycle via the glyoxylate shunt in response to the source of carbon. When bacteria are grown on glucose, IDH is fully active and unphosphorylated, but when grown on acetate or ethanol, the activity of IDH declines drastically concomitant with its phosphorylation. In Salmonella agona (strain SL483), this protein is Isocitrate dehydrogenase kinase/phosphatase.